Here is a 370-residue protein sequence, read N- to C-terminus: Actin-related protein 2/3 complex subunit 1A (370 aa).

WD repeat units follow at residues 6-45 (FLLE…WTKA), 50-89 (EHNG…WKPT), 140-179 (PIRS…VDEK), 202-241 (GTGG…QVST), 244-284 (TEFL…TFVS), and 322-365 (LHQN…SSIQ).

The protein belongs to the WD repeat ARPC1 family. In terms of assembly, probable component of the Arp2/3 complex in which it may replace ARPC1B.

It is found in the cytoplasm. The protein localises to the cytoskeleton. Its subcellular location is the nucleus. In terms of biological role, probably functions as a component of the Arp2/3 complex which is involved in regulation of actin polymerization and together with an activating nucleation-promoting factor (NPF) mediates the formation of branched actin networks. In addition to its role in the cytoplasmic cytoskeleton, the Arp2/3 complex also promotes actin polymerization in the nucleus, thereby regulating gene transcription and repair of damaged DNA. The chain is Actin-related protein 2/3 complex subunit 1A (Arpc1a) from Mus musculus (Mouse).